The following is a 282-amino-acid chain: Pantothenate synthetase (282 aa).

Residue M30–H37 participates in ATP binding. H37 acts as the Proton donor in catalysis. Q61 is a binding site for (R)-pantoate. Q61 provides a ligand contact to beta-alanine. An ATP-binding site is contributed by G147–D150. Q153 contacts (R)-pantoate. Residues V176 and L184 to R187 each bind ATP.

Belongs to the pantothenate synthetase family. Homodimer.

The protein resides in the cytoplasm. The enzyme catalyses (R)-pantoate + beta-alanine + ATP = (R)-pantothenate + AMP + diphosphate + H(+). It functions in the pathway cofactor biosynthesis; (R)-pantothenate biosynthesis; (R)-pantothenate from (R)-pantoate and beta-alanine: step 1/1. Its function is as follows. Catalyzes the condensation of pantoate with beta-alanine in an ATP-dependent reaction via a pantoyl-adenylate intermediate. The sequence is that of Pantothenate synthetase from Bacteroides thetaiotaomicron (strain ATCC 29148 / DSM 2079 / JCM 5827 / CCUG 10774 / NCTC 10582 / VPI-5482 / E50).